A 314-amino-acid chain; its full sequence is tRNA dimethylallyltransferase (314 aa).

Position 12–19 (12–19) interacts with ATP; it reads GPTASGKT. 14–19 contributes to the substrate binding site; that stretch reads TASGKT. Interaction with substrate tRNA stretches follow at residues 37-40 and 162-166; these read DSAL and QRIIR.

This sequence belongs to the IPP transferase family. As to quaternary structure, monomer. The cofactor is Mg(2+).

The enzyme catalyses adenosine(37) in tRNA + dimethylallyl diphosphate = N(6)-dimethylallyladenosine(37) in tRNA + diphosphate. Catalyzes the transfer of a dimethylallyl group onto the adenine at position 37 in tRNAs that read codons beginning with uridine, leading to the formation of N6-(dimethylallyl)adenosine (i(6)A). The chain is tRNA dimethylallyltransferase from Acinetobacter baumannii (strain SDF).